We begin with the raw amino-acid sequence, 619 residues long: 1-deoxy-D-xylulose-5-phosphate synthase (619 aa).

Residues His-80 and 121–123 contribute to the thiamine diphosphate site; that span reads GHS. Asp-152 provides a ligand contact to Mg(2+). Thiamine diphosphate is bound by residues 153 to 154, Asn-181, Tyr-288, and Glu-370; that span reads GA. Residue Asn-181 coordinates Mg(2+).

This sequence belongs to the transketolase family. DXPS subfamily. As to quaternary structure, homodimer. Requires Mg(2+) as cofactor. The cofactor is thiamine diphosphate.

The catalysed reaction is D-glyceraldehyde 3-phosphate + pyruvate + H(+) = 1-deoxy-D-xylulose 5-phosphate + CO2. It functions in the pathway metabolic intermediate biosynthesis; 1-deoxy-D-xylulose 5-phosphate biosynthesis; 1-deoxy-D-xylulose 5-phosphate from D-glyceraldehyde 3-phosphate and pyruvate: step 1/1. Functionally, catalyzes the acyloin condensation reaction between C atoms 2 and 3 of pyruvate and glyceraldehyde 3-phosphate to yield 1-deoxy-D-xylulose-5-phosphate (DXP). The protein is 1-deoxy-D-xylulose-5-phosphate synthase of Yersinia pseudotuberculosis serotype O:3 (strain YPIII).